Here is a 268-residue protein sequence, read N- to C-terminus: Oxygen-evolving enhancer protein 2-1, chloroplastic (268 aa).

The N-terminal 82 residues, methionine 1–alanine 82, are a transit peptide targeting the chloroplast.

This sequence belongs to the PsbP family.

Its subcellular location is the plastid. The protein localises to the chloroplast thylakoid membrane. Its function is as follows. May be involved in the regulation of photosystem II. This is Oxygen-evolving enhancer protein 2-1, chloroplastic (PSBP1) from Nicotiana tabacum (Common tobacco).